Reading from the N-terminus, the 371-residue chain is ATP-dependent protease ATP-binding subunit-like protein AmiB (371 aa).

Position 96–103 (96–103 (GPTGVGKT)) interacts with ATP.

This sequence belongs to the ClpX chaperone family. Requires Mg(2+) as cofactor.

In terms of biological role, unlikely to encode a regulatory protein. Has ATPase activity. AmiB and AmiS may act jointly into a two component ABC transporter system. The polypeptide is ATP-dependent protease ATP-binding subunit-like protein AmiB (amiB) (Pseudomonas aeruginosa (strain ATCC 15692 / DSM 22644 / CIP 104116 / JCM 14847 / LMG 12228 / 1C / PRS 101 / PAO1)).